Consider the following 351-residue polypeptide: CCN family member 3 (351 aa).

The first 24 residues, 1-24 (METGGGQGLPVLLLLLLLLRPCEV), serve as a signal peptide directing secretion. The 75-residue stretch at 27 to 101 (REAACPRPCG…GGGAGICMVL (75 aa)) folds into the IGFBP N-terminal domain. Intrachain disulfides connect Cys-31/Cys-57, Cys-35/Cys-59, Cys-39/Cys-60, Cys-46/Cys-63, Cys-71/Cys-85, and Cys-77/Cys-98. One can recognise a VWFC domain in the interval 104 to 170 (DNCVFDGMIY…GECCEKWVCD (67 aa)). One can recognise a TSP type-1 domain in the interval 201–246 (NCIEQTTEWSACSKSCGMGFSTRVTNRNQQCEMVKQTRLCMMRPCE). 5 cysteine pairs are disulfide-bonded: Cys-258-Cys-295, Cys-275-Cys-309, Cys-286-Cys-325, Cys-289-Cys-327, and Cys-294-Cys-331. The CTCK domain maps to 258–332 (CIQTKKSMKA…NTCVCHGNCP (75 aa)). Residue Asn-274 is glycosylated (N-linked (GlcNAc...) asparagine).

Belongs to the CCN family. In terms of tissue distribution, brain and heart, and at a lower level in muscle and intestine, in the embryo. Lung and less so in brain and spleen, in adult chicken.

It localises to the secreted. The protein localises to the cytoplasm. It is found in the cell junction. Its subcellular location is the gap junction. Functionally, immediate-early protein likely to play a role in cell growth regulation. Its overexpression is associated with tumorigenesis and expression of a N-terminal-truncated version of CCN3 gene in chicken embryonic fibroblasts (CEF) is sufficient to induce the transformation of CEF in vitro. This Gallus gallus (Chicken) protein is CCN family member 3 (CCN3).